Here is an 86-residue protein sequence, read N- to C-terminus: Small ribosomal subunit protein bS20 (86 aa).

Basic residues predominate over residues 1 to 11 (MANIKQQKKRN). Positions 1–20 (MANIKQQKKRNKTNEKRRLQ) are disordered.

The protein belongs to the bacterial ribosomal protein bS20 family.

Binds directly to 16S ribosomal RNA. The sequence is that of Small ribosomal subunit protein bS20 from Aster yellows witches'-broom phytoplasma (strain AYWB).